Consider the following 488-residue polypeptide: Cobyric acid synthase (488 aa).

Positions 255–442 constitute a GATase cobBQ-type domain; the sequence is ALKIAVPVLP…LHGLFGSDAY (188 aa). Catalysis depends on Cys-337, which acts as the Nucleophile. Residue His-434 is part of the active site.

It belongs to the CobB/CobQ family. CobQ subfamily.

It participates in cofactor biosynthesis; adenosylcobalamin biosynthesis. In terms of biological role, catalyzes amidations at positions B, D, E, and G on adenosylcobyrinic A,C-diamide. NH(2) groups are provided by glutamine, and one molecule of ATP is hydrogenolyzed for each amidation. The sequence is that of Cobyric acid synthase from Rhizobium johnstonii (strain DSM 114642 / LMG 32736 / 3841) (Rhizobium leguminosarum bv. viciae).